Reading from the N-terminus, the 361-residue chain is Queuine tRNA-ribosyltransferase (361 aa).

D92 functions as the Proton acceptor in the catalytic mechanism. Residues 92 to 96 (DSGGF), D146, Q189, and G216 contribute to the substrate site. The RNA binding stretch occupies residues 247 to 253 (GVGKPAD). The active-site Nucleophile is the D266. The tract at residues 271-275 (TRAGR) is RNA binding; important for wobble base 34 recognition. Zn(2+) contacts are provided by C304, C306, C309, and H335.

This sequence belongs to the queuine tRNA-ribosyltransferase family. As to quaternary structure, homodimer. Within each dimer, one monomer is responsible for RNA recognition and catalysis, while the other monomer binds to the replacement base PreQ1. Zn(2+) is required as a cofactor.

It carries out the reaction 7-aminomethyl-7-carbaguanine + guanosine(34) in tRNA = 7-aminomethyl-7-carbaguanosine(34) in tRNA + guanine. It functions in the pathway tRNA modification; tRNA-queuosine biosynthesis. Functionally, catalyzes the base-exchange of a guanine (G) residue with the queuine precursor 7-aminomethyl-7-deazaguanine (PreQ1) at position 34 (anticodon wobble position) in tRNAs with GU(N) anticodons (tRNA-Asp, -Asn, -His and -Tyr). Catalysis occurs through a double-displacement mechanism. The nucleophile active site attacks the C1' of nucleotide 34 to detach the guanine base from the RNA, forming a covalent enzyme-RNA intermediate. The proton acceptor active site deprotonates the incoming PreQ1, allowing a nucleophilic attack on the C1' of the ribose to form the product. After dissociation, two additional enzymatic reactions on the tRNA convert PreQ1 to queuine (Q), resulting in the hypermodified nucleoside queuosine (7-(((4,5-cis-dihydroxy-2-cyclopenten-1-yl)amino)methyl)-7-deazaguanosine). In Rickettsia massiliae (strain Mtu5), this protein is Queuine tRNA-ribosyltransferase.